Consider the following 737-residue polypeptide: Cellulose synthase-like protein E1 (737 aa).

2 helical membrane-spanning segments follow: residues 26–45 and 58–78; these read AVYR…VLYY and AAWL…VIAQ. Active-site residues include Asp-146 and Asp-451. The next 5 helical transmembrane spans lie at 528–548, 551–571, 654–674, 683–703, and 716–736; these read LWAA…LGLV, TPLF…VFCV, VIIA…LSQI, WNVF…NMPI, and IPTA…LVPI.

It belongs to the glycosyltransferase 2 family. Plant cellulose synthase-like E subfamily.

It localises to the golgi apparatus membrane. Functionally, thought to be a Golgi-localized beta-glycan synthase that polymerize the backbones of noncellulosic polysaccharides (hemicelluloses) of plant cell wall. This chain is Cellulose synthase-like protein E1 (CSLE1), found in Oryza sativa subsp. japonica (Rice).